The primary structure comprises 256 residues: MLRIADRDFHSRLFIGSGKYSSADIMQKSLAASGSELVTLALKRVELERPTDDIVTPIQNLGLQLLPNTSGAKTAQDAIFAARLAREALGTHWLKLEIHPDPNYLLPDPIETLKAAETLVKEGFTVLPYCGADPVLCKRLEEVGCAAVMPLGAPIGSNQGLLTRDFLRIIIEQASLPVIVDAGIGAPSHAVEAMEMGADAVLVNTAIATANDPVAMSKTFRDAVIVGRQAFEAGLSQNASLKASASSPLTEFLESL.

K95 serves as the catalytic Schiff-base intermediate with DXP. Residues G156, 182–183 (AG), and 204–205 (NT) contribute to the 1-deoxy-D-xylulose 5-phosphate site.

The protein belongs to the ThiG family. Homotetramer. Forms heterodimers with either ThiH or ThiS.

Its subcellular location is the cytoplasm. The catalysed reaction is [ThiS sulfur-carrier protein]-C-terminal-Gly-aminoethanethioate + 2-iminoacetate + 1-deoxy-D-xylulose 5-phosphate = [ThiS sulfur-carrier protein]-C-terminal Gly-Gly + 2-[(2R,5Z)-2-carboxy-4-methylthiazol-5(2H)-ylidene]ethyl phosphate + 2 H2O + H(+). It functions in the pathway cofactor biosynthesis; thiamine diphosphate biosynthesis. Its function is as follows. Catalyzes the rearrangement of 1-deoxy-D-xylulose 5-phosphate (DXP) to produce the thiazole phosphate moiety of thiamine. Sulfur is provided by the thiocarboxylate moiety of the carrier protein ThiS. In vitro, sulfur can be provided by H(2)S. The polypeptide is Thiazole synthase (Idiomarina loihiensis (strain ATCC BAA-735 / DSM 15497 / L2-TR)).